Here is a 244-residue protein sequence, read N- to C-terminus: MLKQSEAIVLRTYPMREADLLVTLFTRAEGKIKGVAKAAKKSRRRFGGALEPLTHVRVYYEDRERQELTRLDSCDVLASPMSAEVDYPRALALGHVAEVIDDLLPDREPNDAVFRLSLAVLGQLVPGAVWMPLTYFDLWMVRLAGFLPDLMHCVVCGEELDDRAFFHPLVDGLVCANDKRLASTELTVESRAIADLMFRAPLENFAGAPWPRQRCADLRRFLVQILERHLEKKLVTVTMLDKLD.

The protein belongs to the RecO family.

Functionally, involved in DNA repair and RecF pathway recombination. The sequence is that of DNA repair protein RecO from Koribacter versatilis (strain Ellin345).